Reading from the N-terminus, the 689-residue chain is Homoaconitase, mitochondrial (689 aa).

The N-terminal 17 residues, 1–17 (MVVLRRSFHVYTRLQRG), are a transit peptide targeting the mitochondrion. [4Fe-4S] cluster-binding residues include Cys-336, Cys-403, and Cys-406.

This sequence belongs to the aconitase/IPM isomerase family. [4Fe-4S] cluster is required as a cofactor.

Its subcellular location is the mitochondrion. It catalyses the reaction (2R,3S)-homoisocitrate = cis-homoaconitate + H2O. The protein operates within amino-acid biosynthesis; L-lysine biosynthesis via AAA pathway; L-alpha-aminoadipate from 2-oxoglutarate: step 3/5. Its function is as follows. Catalyzes the reversible hydration of cis-homoaconitate to (2R,3S)-homoisocitrate, a step in the alpha-aminoadipate pathway for lysine biosynthesis. In Candida glabrata (strain ATCC 2001 / BCRC 20586 / JCM 3761 / NBRC 0622 / NRRL Y-65 / CBS 138) (Yeast), this protein is Homoaconitase, mitochondrial (LYS4).